Here is a 299-residue protein sequence, read N- to C-terminus: DNA repair protein RecO (299 aa).

The segment at Met-1–Ser-62 is disordered. Over residues Ala-25–Ala-41 the composition is skewed to low complexity.

The protein belongs to the RecO family.

Its function is as follows. Involved in DNA repair and RecF pathway recombination. This Paraburkholderia xenovorans (strain LB400) protein is DNA repair protein RecO.